The following is a 214-amino-acid chain: Adenylate kinase (214 aa).

Residue G10–T15 participates in ATP binding. An NMP region spans residues S30–V59. Residues T31, R36, Q57–V59, G85–R88, and Q92 contribute to the AMP site. The interval G122–D159 is LID. ATP-binding positions include R123 and V132 to Y133. AMP is bound by residues R156 and R167. Q200 provides a ligand contact to ATP.

The protein belongs to the adenylate kinase family. In terms of assembly, monomer.

The protein localises to the cytoplasm. It carries out the reaction AMP + ATP = 2 ADP. The protein operates within purine metabolism; AMP biosynthesis via salvage pathway; AMP from ADP: step 1/1. Its function is as follows. Catalyzes the reversible transfer of the terminal phosphate group between ATP and AMP. Plays an important role in cellular energy homeostasis and in adenine nucleotide metabolism. The chain is Adenylate kinase from Shewanella amazonensis (strain ATCC BAA-1098 / SB2B).